Reading from the N-terminus, the 846-residue chain is Inactive cap-specific mRNA (nucleoside-2'-O-)-methyltransferase 1B (846 aa).

The tract at residues 30–50 (DDEDDFVDDPSPTEQKTKAEK) is disordered. The region spanning 44–90 (QKTKAEKKMERMGYKAGEGLGKNKQGIQEPIAISFREGKAGLGHEQW) is the G-patch domain. Positions 184–413 (FFLNRSAMKT…ERFVVCKGLR (230 aa)) constitute a RrmJ-type SAM-dependent 2'-O-MTase domain.

This is Inactive cap-specific mRNA (nucleoside-2'-O-)-methyltransferase 1B from Caenorhabditis briggsae.